We begin with the raw amino-acid sequence, 107 residues long: Putative double-stranded DNA mimic protein HSM_1473 (107 aa).

The protein belongs to the putative dsDNA mimic protein family.

Functionally, may act as a double-stranded DNA (dsDNA) mimic. Probably regulates the activity of a dsDNA-binding protein. The protein is Putative double-stranded DNA mimic protein HSM_1473 of Histophilus somni (strain 2336) (Haemophilus somnus).